A 229-amino-acid polypeptide reads, in one-letter code: Ribonuclease HII (229 aa).

Residues 34–225 (GPVAGVDEAG…VKAAHDQWLQ (192 aa)) enclose the RNase H type-2 domain. The a divalent metal cation site is built by aspartate 40, glutamate 41, and aspartate 134.

It belongs to the RNase HII family. Mn(2+) serves as cofactor. Requires Mg(2+) as cofactor.

It is found in the cytoplasm. The enzyme catalyses Endonucleolytic cleavage to 5'-phosphomonoester.. In terms of biological role, endonuclease that specifically degrades the RNA of RNA-DNA hybrids. This is Ribonuclease HII from Corynebacterium diphtheriae (strain ATCC 700971 / NCTC 13129 / Biotype gravis).